The following is a 150-amino-acid chain: Ribonuclease K6 (150 aa).

The first 23 residues, M1–A23, serve as a signal peptide directing secretion. The Proton acceptor role is filled by H38. 4 disulfides stabilise this stretch: C46–C104, C60–C114, C78–C129, and C85–C92. N55 is a glycosylation site (N-linked (GlcNAc...) asparagine). Substrate-binding positions include K61 to T65 and K86. N-linked (GlcNAc...) asparagine glycosylation occurs at N100. Residue R105 coordinates substrate. The active-site Proton donor is the H145.

Belongs to the pancreatic ribonuclease family. Interacts (via N-terminus) with bacterial lipopolysaccharide (LPS).

It localises to the secreted. The protein resides in the lysosome. Its subcellular location is the cytoplasmic granule. In terms of biological role, ribonuclease which shows a preference for the pyrimidines uridine and cytosine. Has potent antibacterial activity against a range of Gram-positive and Gram-negative bacteria, including P.aeruginosa, A.baumanii, M.luteus, S.aureus, E.faecalis, E.faecium, S.saprophyticus and E.coli. Causes loss of bacterial membrane integrity, and also promotes agglutination of Gram-negative bacteria. Probably contributes to urinary tract sterility. Bactericidal activity is independent of RNase activity. This Miopithecus talapoin (Angolan talapoin) protein is Ribonuclease K6 (RNASE6).